A 433-amino-acid polypeptide reads, in one-letter code: Trigger factor (433 aa).

The region spanning 161–246 is the PPIase FKBP-type domain; the sequence is GKRVSIDFVG…VNKVEARELP (86 aa).

This sequence belongs to the FKBP-type PPIase family. Tig subfamily.

The protein localises to the cytoplasm. It carries out the reaction [protein]-peptidylproline (omega=180) = [protein]-peptidylproline (omega=0). Its function is as follows. Involved in protein export. Acts as a chaperone by maintaining the newly synthesized protein in an open conformation. Functions as a peptidyl-prolyl cis-trans isomerase. The sequence is that of Trigger factor from Vibrio cholerae serotype O1 (strain ATCC 39541 / Classical Ogawa 395 / O395).